A 343-amino-acid chain; its full sequence is MNNAIILGIIWHLVGAASAACFYAPFKQVKKWSWETMWSIGGLVSWLILPWTVSYLLLPDFWQYYGSFSIATLLPVFLFGAMWGIGNINYGLTMRYLGMSMGIGIAIGITLIIGTLMTPILQGRFDVLLGTPGGRMTLLGVFVALIGVAIVSYAGLLKERAMGIQAEEFNLKKGLILAVMCGIFSAGMSFAMDAAKPMHEAASALGINSLYVALPSYVIIMGGGAIINLSYCFIRLATLKNLSVKADFSVAKPLLITNILFSALAGLMWYLQFFYAWGHAKIPQQYDYMSWMLHMSFYVLCGGIVGLLLKEWKCSTKKPVAVLCIGCLVIILAANIVGLGMAA.

10 helical membrane-spanning segments follow: residues 4 to 24, 38 to 58, 68 to 88, 101 to 121, 137 to 157, 175 to 195, 207 to 227, 254 to 274, 289 to 309, and 320 to 340; these read AIIL…CFYA, WSIG…YLLL, FSIA…IGNI, MGIG…TPIL, TLLG…AGLL, LILA…MDAA, INSL…GAII, LLIT…LQFF, MSWM…GLLL, and VAVL…VGLG.

It belongs to the L-rhamnose transporter (TC 2.A.7.6) family.

The protein resides in the cell inner membrane. The catalysed reaction is L-rhamnopyranose(in) + H(+)(in) = L-rhamnopyranose(out) + H(+)(out). Functionally, uptake of L-rhamnose across the cytoplasmic membrane with the concomitant transport of protons into the cell (symport system). This is L-rhamnose-proton symporter from Yersinia pestis bv. Antiqua (strain Antiqua).